The chain runs to 188 residues: Threonylcarbamoyl-AMP synthase (188 aa).

Positions 4 to 188 (VENLQQAVDA…ARSLQVLRQG (185 aa)) constitute a YrdC-like domain.

This sequence belongs to the SUA5 family. TsaC subfamily.

The protein localises to the cytoplasm. The enzyme catalyses L-threonine + hydrogencarbonate + ATP = L-threonylcarbamoyladenylate + diphosphate + H2O. Required for the formation of a threonylcarbamoyl group on adenosine at position 37 (t(6)A37) in tRNAs that read codons beginning with adenine. Catalyzes the conversion of L-threonine, HCO(3)(-)/CO(2) and ATP to give threonylcarbamoyl-AMP (TC-AMP) as the acyladenylate intermediate, with the release of diphosphate. In Vibrio cholerae serotype O1 (strain ATCC 39541 / Classical Ogawa 395 / O395), this protein is Threonylcarbamoyl-AMP synthase.